The sequence spans 830 residues: Pentatricopeptide repeat-containing protein At5g55740, chloroplastic (830 aa).

The N-terminal 59 residues, 1–59 (MASLPFNTIPNKVPFSVSSKPSSKHHDEQAHSPSSTSYFHRVSSLCKNGEIKEALSLVT), are a transit peptide targeting the chloroplast. The segment at 15 to 36 (FSVSSKPSSKHHDEQAHSPSST) is disordered. PPR repeat units lie at residues 69 to 103 (GPEI…GDFY), 106 to 136 (NEYI…LRVR), 137 to 171 (NVFS…EIFP), 172 to 206 (DNFV…GLED), 207 to 237 (CVFV…IPDR), 238 to 272 (NAVA…GVEP), 273 to 307 (TRVT…GMEL), 308 to 338 (DNIL…MFEK), 339 to 373 (DVVT…KLKY), 374 to 408 (DCVT…SFES), 409 to 439 (DIVL…TVEK), 440 to 474 (DLIL…GVPP), 475 to 509 (NVIT…GIIP), 510 to 544 (NLIS…GLRP), 545 to 575 (NAFS…IIRN), 581 to 611 (LVSI…KLYS), 612 to 646 (ELPL…GLKP), 647 to 682 (DNIT…SMKP), and 683 to 713 (CLEH…MPFK). The segment at 718–793 (MIQSLVASCN…KPGCSWIQIT (76 aa)) is type E motif. A type E(+) motif region spans residues 796–826 (EGVHVFVANDKTHTRINEIQMMLALLLYDMG).

Belongs to the PPR family. PCMP-E subfamily.

It localises to the plastid. It is found in the chloroplast. Plays a major role in chloroplast RNA editing. Acts as a site-recognition transacting factor involved in the edition of the site 2 of ndhD (ndhD-2), which encodes a subunit of the NDH complex. The chain is Pentatricopeptide repeat-containing protein At5g55740, chloroplastic (CRR21) from Arabidopsis thaliana (Mouse-ear cress).